The following is a 468-amino-acid chain: Adenosylhomocysteinase (468 aa).

Residues threonine 57, aspartate 132, and glutamate 194 each coordinate substrate. Position 195–197 (195–197 (TTT)) interacts with NAD(+). The substrate site is built by lysine 224 and aspartate 228. NAD(+) is bound by residues asparagine 229, 258 to 263 (GFGDVG), glutamate 281, asparagine 316, 337 to 339 (IGH), and asparagine 382.

Belongs to the adenosylhomocysteinase family. It depends on NAD(+) as a cofactor.

Its subcellular location is the cytoplasm. It carries out the reaction S-adenosyl-L-homocysteine + H2O = L-homocysteine + adenosine. It participates in amino-acid biosynthesis; L-homocysteine biosynthesis; L-homocysteine from S-adenosyl-L-homocysteine: step 1/1. In terms of biological role, may play a key role in the regulation of the intracellular concentration of adenosylhomocysteine. This is Adenosylhomocysteinase from Methylobacterium nodulans (strain LMG 21967 / CNCM I-2342 / ORS 2060).